Consider the following 1529-residue polypeptide: ATP-dependent permease PDR15 (1529 aa).

The span at 1-13 shows a compositional bias: basic and acidic residues; the sequence is MSSDIRDVEERNS. The disordered stretch occupies residues 1–38; that stretch reads MSSDIRDVEERNSRSSSSSSSSNSAAQSIGQHPYRGFD. Residues 1-531 lie on the Cytoplasmic side of the membrane; that stretch reads MSSDIRDVEE…NFWRMKQSAS (531 aa). Residues 14–24 show a composition bias toward low complexity; it reads RSSSSSSSSNS. Residues 171–420 enclose the ABC transporter 1 domain; that stretch reads LRLLKPSKEE…FQDMGYYCPP (250 aa). A helical membrane pass occupies residues 532 to 552; the sequence is VTLWQVIGNSVMAFILGSMFY. Topologically, residues 553 to 567 are extracellular; that stretch reads KVMKKNDTSTFYFRG. A glycan (N-linked (GlcNAc...) asparagine) is linked at Asn-558. A helical transmembrane segment spans residues 568–588; that stretch reads AAMFFAILFNAFSCLLEIFSL. The Cytoplasmic segment spans residues 589-617; it reads YETRPITEKHRTYSLYHPSADAFASVLSE. Residues 618–638 traverse the membrane as a helical segment; sequence MPPKLITAVCFNIIFYFLVDF. At 639–642 the chain is on the extracellular side; that stretch reads RRNG. The chain crosses the membrane as a helical span at residues 643 to 663; that stretch reads GVFFFYFLINVIATFTLSHLF. At 664–699 the chain is on the cytoplasmic side; the sequence is RCVGSLTKTLQEAMVPASMLLLAISMYTGFAIPKTK. Residues 700–720 form a helical membrane-spanning segment; the sequence is ILGWSIWIWYINPLAYLFESL. Residues 721–783 are Extracellular-facing; it reads MINEFHDRRF…YDYEHKHKWR (63 aa). Asn-744 carries an N-linked (GlcNAc...) asparagine glycan. A helical transmembrane segment spans residues 784 to 804; that stretch reads GFGIGMAYVVFFFFVYLILCE. The Cytoplasmic segment spans residues 805-1219; the sequence is YNEGAKQKGE…LFQQYWRSPD (415 aa). Residues 829-840 are compositionally biased toward basic and acidic residues; that stretch reads EGKLQEKHRPGD. Residues 829–873 are disordered; the sequence is EGKLQEKHRPGDIENNAGSSPDSATTEKKILDDSSEGSDSSSDNA. An ABC transporter 2 domain is found at 884–1127; that stretch reads FHWRDLCYDV…MIDYFESKGA (244 aa). 920-927 serves as a coordination point for ATP; the sequence is GASGAGKT. The helical transmembrane segment at 1220-1240 threads the bilayer; that stretch reads YLWSKFILTIFNQVFIGFTFF. The Extracellular segment spans residues 1241–1312; the sequence is KADRSLQGLQ…VEIPWNILAG (72 aa). Residues 1313–1333 form a helical membrane-spanning segment; it reads TIAYCIYYYAVGFYANASAAG. Over 1334-1340 the chain is Cytoplasmic; sequence QLHERGA. Residues 1341 to 1361 traverse the membrane as a helical segment; the sequence is LFWLFSIAFYVYIGSMGLLMI. The Extracellular portion of the chain corresponds to 1362–1368; sequence SFNEVAE. A helical transmembrane segment spans residues 1369 to 1389; the sequence is TAAHMGTLLFTMALSFCGVMA. Residues 1390–1396 lie on the Cytoplasmic side of the membrane; that stretch reads TPKVMPR. A helical membrane pass occupies residues 1397-1417; sequence FWIFMYRVSPLTYMIDALLAL. Over 1418–1492 the chain is Extracellular; the sequence is GVANVDVKCS…SSHYYRRWRN (75 aa). A helical membrane pass occupies residues 1493 to 1513; the sequence is YGIFICYIAFDYIAATFLYWL. At 1514 to 1529 the chain is on the cytoplasmic side; the sequence is SRVPKKNGKISEKPKK.

Belongs to the ABC transporter superfamily. ABCG family. PDR (TC 3.A.1.205) subfamily.

It is found in the membrane. In Saccharomyces cerevisiae (strain ATCC 204508 / S288c) (Baker's yeast), this protein is ATP-dependent permease PDR15 (PDR15).